Reading from the N-terminus, the 332-residue chain is Glycerol-3-phosphate dehydrogenase [NAD(P)+] (332 aa).

Tryptophan 11, arginine 30, and lysine 108 together coordinate NADPH. Residues lysine 108, glycine 137, and serine 139 each contribute to the sn-glycerol 3-phosphate site. An NADPH-binding site is contributed by alanine 141. The sn-glycerol 3-phosphate site is built by lysine 192, aspartate 245, serine 255, arginine 256, and asparagine 257. The active-site Proton acceptor is lysine 192. Arginine 256 is an NADPH binding site. NADPH-binding residues include valine 280 and glutamate 282.

Belongs to the NAD-dependent glycerol-3-phosphate dehydrogenase family.

Its subcellular location is the cytoplasm. The enzyme catalyses sn-glycerol 3-phosphate + NAD(+) = dihydroxyacetone phosphate + NADH + H(+). It catalyses the reaction sn-glycerol 3-phosphate + NADP(+) = dihydroxyacetone phosphate + NADPH + H(+). Its pathway is membrane lipid metabolism; glycerophospholipid metabolism. Its function is as follows. Catalyzes the reduction of the glycolytic intermediate dihydroxyacetone phosphate (DHAP) to sn-glycerol 3-phosphate (G3P), the key precursor for phospholipid synthesis. The chain is Glycerol-3-phosphate dehydrogenase [NAD(P)+] from Burkholderia lata (strain ATCC 17760 / DSM 23089 / LMG 22485 / NCIMB 9086 / R18194 / 383).